Here is a 124-residue protein sequence, read N- to C-terminus: Large ribosomal subunit protein uL18 (124 aa).

It belongs to the universal ribosomal protein uL18 family. As to quaternary structure, part of the 50S ribosomal subunit; part of the 5S rRNA/L5/L18/L25 subcomplex. Contacts the 5S and 23S rRNAs.

This is one of the proteins that bind and probably mediate the attachment of the 5S RNA into the large ribosomal subunit, where it forms part of the central protuberance. The protein is Large ribosomal subunit protein uL18 of Frankia casuarinae (strain DSM 45818 / CECT 9043 / HFP020203 / CcI3).